The following is a 305-amino-acid chain: Probable L-ribulose-5-phosphate 3-epimerase UlaE (305 aa).

It belongs to the L-ribulose-5-phosphate 3-epimerase family.

The enzyme catalyses L-ribulose 5-phosphate = L-xylulose 5-phosphate. Its pathway is cofactor degradation; L-ascorbate degradation; D-xylulose 5-phosphate from L-ascorbate: step 3/4. Its function is as follows. Catalyzes the isomerization of L-xylulose-5-phosphate to L-ribulose-5-phosphate. Is involved in the anaerobic L-ascorbate utilization. This is Probable L-ribulose-5-phosphate 3-epimerase UlaE (ulaE) from Mycoplasma pneumoniae (strain ATCC 29342 / M129 / Subtype 1) (Mycoplasmoides pneumoniae).